A 415-amino-acid polypeptide reads, in one-letter code: Zona pellucida-like domain-containing protein 1 (415 aa).

The signal sequence occupies residues 1 to 19 (MEPIWLLLLLAIFTVSVSA). Topologically, residues 20–372 (QFNGYNCDAN…QQFQINSVTS (353 aa)) are extracellular. The 278-residue stretch at 43–320 (YCGVQTITMK…PTCHNRDRRD (278 aa)) folds into the ZP domain. 4 disulfide bridges follow: cysteine 44/cysteine 155, cysteine 79/cysteine 104, cysteine 235/cysteine 296, and cysteine 255/cysteine 313. The chain crosses the membrane as a helical span at residues 373–393 (ALISGVVILGATSLSFFIIAL). Topologically, residues 394-415 (TLLNRKKQNSLVLCGIRNPVFN) are cytoplasmic.

In terms of processing, proteolytically cleaved before the transmembrane segment to yield the secreted form found in the extracellular matrix of the cupula.

It localises to the cytoplasmic vesicle membrane. The protein resides in the secreted. Its subcellular location is the extracellular space. The protein localises to the extracellular matrix. Glycoprotein which is a component of the gelatinous extracellular matrix in the cupulae of the vestibular organ. This Xenopus laevis (African clawed frog) protein is Zona pellucida-like domain-containing protein 1 (zpld1).